The following is a 397-amino-acid chain: MELVGWLVDKGITSEKQWIQEDQASYISFNAASNSRSQIKAALDNAGKIMSLTKTAPDYLVGQQPVEDISSNRIYKILELNGYDPQYAASVFLGWATKKFGKRNTIWLFGPATTGKTNIAEAIAHTVPFYGCVNWTNENFPFNDCVDKMVIWWEEGKMTAKVVESAKAILGGSKVRVDQKCKSSAQIDPTPVIVTSNTNMCAVIDGNSTTFEHQQPLQDRMFKFELTRRLDHDFGKVTKQEVKDFFRWAKDHVVEVEHEFYVKKGGAKKRPAPSDADISEPKRVRESVAQPSTSDAEASINYADRYQNKCSRHVGMNLMLFPCRQCERMNQNSNICFTHGQKDCLECFPVSESQPVSVVKKAYQKLCYIHHIMGKVPDACTACDLVNVDLDDCIFEQ.

An SF3 helicase domain is found at 84 to 239 (DPQYAASVFL…LDHDFGKVTK (156 aa)). 110 to 117 (GPATTGKT) is an ATP binding site. The disordered stretch occupies residues 265 to 296 (GGAKKRPAPSDADISEPKRVRESVAQPSTSDA).

Homooligomer. Interacts with host PRKX.

Its subcellular location is the host nucleus. Its function is as follows. Plays a critical role during packaging of viral DNA into empty capsids, where they are thought to be part of the packaging motor complex. The single stranded genomic DNA is packaged in a 3' to 5' direction and requires the association between viral DNA and Rep40. Regulates host PKA activity by interacting with host PRKX as a mechanism to interfere with helper virus propagation and to promote its own replication. The sequence is that of Protein Rep52 (Rep52) from Mammalia (AAV-2).